A 432-amino-acid chain; its full sequence is Cysteine desulfurase, mitosomal (432 aa).

Pyridoxal 5'-phosphate-binding positions include 102–103 (AT), glutamine 212, and 232–234 (CAH). Lysine 235 carries the N6-(pyridoxal phosphate)lysine modification. Threonine 272 lines the pyridoxal 5'-phosphate pocket. Catalysis depends on cysteine 357, which acts as the Cysteine persulfide intermediate. Residue cysteine 357 participates in [2Fe-2S] cluster binding.

The protein belongs to the class-V pyridoxal-phosphate-dependent aminotransferase family. NifS/IscS subfamily. Pyridoxal 5'-phosphate is required as a cofactor.

The protein resides in the mitosome. The enzyme catalyses (sulfur carrier)-H + L-cysteine = (sulfur carrier)-SH + L-alanine. In terms of biological role, catalyzes the removal of elemental sulfur from cysteine to produce alanine. It supplies the inorganic sulfur for iron-sulfur (Fe-S) clusters in mitosomes. In Encephalitozoon cuniculi (strain GB-M1) (Microsporidian parasite), this protein is Cysteine desulfurase, mitosomal.